We begin with the raw amino-acid sequence, 217 residues long: Claudin-9 (217 aa).

Residues 1-12 (MASTGLELLGMT) are Cytoplasmic-facing. Residues 13 to 33 (LAVLGWLGTLVSCALPLWKVT) traverse the membrane as a helical segment. Topologically, residues 34–81 (AFIGNSIVVAQVVWEGLWMSCVVQSTGQMQCKVYDSLLALPQDLQAAR) are extracellular. A helical transmembrane segment spans residues 82-102 (ALCVVALLLALLGLLVAITGA). Over 103-116 (QCTTCVEDEGAKAR) the chain is Cytoplasmic. Residues 117 to 137 (IVLTAGVLLLLSGILVLIPVC) traverse the membrane as a helical segment. The Extracellular portion of the chain corresponds to 138–159 (WTAHAIIQDFYNPLVAEALKRE). Residues 160–180 (LGASLYLGWAAAALLMLGGGL) traverse the membrane as a helical segment. Residues 181 to 217 (LCCTCPPSHFERPRGPRLGYSIPSRSGASGLDKRDYV) are Cytoplasmic-facing.

It belongs to the claudin family. As to quaternary structure, interacts with CLDN1, CD81 and OCLN.

Its subcellular location is the cell junction. The protein resides in the tight junction. It is found in the cell membrane. Functionally, plays a major role in tight junction-specific obliteration of the intercellular space, through calcium-independent cell-adhesion activity. The protein is Claudin-9 (Cldn9) of Mus musculus (Mouse).